The chain runs to 557 residues: Protein Red (557 aa).

The interval 1 to 90 (MPERDSEPFS…YAKLRQQEIE (90 aa)) is disordered. Basic and acidic residues predominate over residues 16 to 25 (DGHDVDDPHS). The segment covering 42–53 (TPRAAPTSAPPS) has biased composition (low complexity). N6-acetyllysine is present on residues Lys98 and Lys137. Lys151 is covalently cross-linked (Glycyl lysine isopeptide (Lys-Gly) (interchain with G-Cter in SUMO2)). The tract at residues 181-205 (KEKEEEELMEKPQKETKKDEDPENK) is disordered. Position 287 is a phosphoserine (Ser287). Residues 294 to 303 (RNKKLKKKDK) show a composition bias toward basic residues. A disordered region spans residues 294–402 (RNKKLKKKDK…PMDVDKGPGS (109 aa)). Basic and acidic residues predominate over residues 304–313 (GKLEEKKPPE). Glycyl lysine isopeptide (Lys-Gly) (interchain with G-Cter in SUMO2) cross-links involve residues Lys310 and Lys331. Residues 332 to 398 (TPRDKERERY…VDDEPMDVDK (67 aa)) are compositionally biased toward basic and acidic residues. 17 repeat units span residues 342–343 (RE), 344–345 (RE), 346–347 (RD), 348–349 (RE), 350–351 (RD), 352–353 (RD), 354–355 (RE), 356–357 (RD), 358–359 (RE), 360–361 (RD), 362–363 (RE), 364–365 (RE), 366–367 (RE), 368–369 (RD), 370–371 (RE), 372–373 (RE), and 374–375 (RE). Positions 342 to 375 (RERERDRERDRDRERDRERDRERERERDRERERE) are 17 X 2 AA tandem repeats of R-[ED]. Residues Lys386, Lys388, Lys404, and Lys408 each participate in a glycyl lysine isopeptide (Lys-Gly) (interchain with G-Cter in SUMO2) cross-link. A phosphoserine mark is found at Ser417 and Ser460. Thr485 is subject to Phosphothreonine. Glycyl lysine isopeptide (Lys-Gly) (interchain with G-Cter in SUMO2) cross-links involve residues Lys496, Lys501, and Lys509. At Ser536 the chain carries Phosphoserine. Glycyl lysine isopeptide (Lys-Gly) (interchain with G-Cter in SUMO2) cross-links involve residues Lys541, Lys543, Lys544, and Lys553.

This sequence belongs to the RED family. In terms of assembly, component of the spliceosome B complex. Interacts with SMU1. Interacts with MAD1L1. May interact with DHX15.

The protein localises to the nucleus. Its subcellular location is the nucleoplasm. It localises to the chromosome. The protein resides in the cytoplasm. It is found in the cytoskeleton. The protein localises to the spindle pole. Involved in pre-mRNA splicing as a component of the spliceosome. Auxiliary spliceosomal protein that regulates selection of alternative splice sites in a small set of target pre-mRNA species. Required for normal mitotic cell cycle progression. Recruits MAD1L1 and MAD2L1 to kinetochores, and is required to trigger the spindle assembly checkpoint. Required for normal accumulation of SMU1. This chain is Protein Red (Ik), found in Rattus norvegicus (Rat).